The sequence spans 389 residues: MDFVHCNKCFNRKPPDGFFISSCFHIFCTKCAKADLAVCLICKKNVRLVRLDGNISSGIKIYFADPIKMVADSLAKIQKKIDFQQSTRDHLVKYLTKEKEKKRQMEVYFRTKGQEFDSQRKKLAEATAWIQMAEKKLQASEEERVKAEREIEECQAKLKSMTNLMSADTLGMNSQTPFPFSLAESQETAPSLVESSANSTFNMVSPLVSSPASSPNSINYNSFFENGSRTRPESLNEEAMFNTMLQSSGQSANANTSESSAFSVAFNNIFTPSRNNMGDSSMINKTTANQTIMDKTSMSLENWRQNRANSFGVHDISKRDSSLPTGGGSAIRVHHFKQNSRITPIAQNRRSAAGFDRQQIQEMRRISSQPGYLAQRKPINGRSFIGPAD.

The segment at 6 to 43 (CNKCFNRKPPDGFFISSCFHIFCTKCAKADLAVCLICK) adopts an RING-type zinc-finger fold. Residues 123–164 (LAEATAWIQMAEKKLQASEEERVKAEREIEECQAKLKSMTNL) are a coiled coil. The tract at residues 366–389 (ISSQPGYLAQRKPINGRSFIGPAD) is disordered.

In terms of assembly, interacts with zhp-4; the interaction is required for their localization along paired chromosomes and stability, and for the formation of chiasma during meiotic recombination. Expressed througout the gonad (at protein level). Expressed in the germline.

The protein resides in the chromosome. Functionally, recruited co-dependently with zhp-4 to the synaptonemal complex between homologous chromosome pairs to regulate the formation and number of crossover events between homologs during meiotic recombination. In the early stages of pachytene, in complex with zhp-4, recruited by the zhp-1-zhp-2 heterodimer to designated crossover sites along the homolog pair to stabilize other pro-crossover factors such as rmh-1, msh-5 and cosa-1. This in turn facilitates crossover and promotes the formation of chiasma in each meiotic nucleus at the late pachytene stage of meiosis. Plays a role in the segregation of homologous chromosomes following the completion of crossovers. Together with him-14 and msh-5 plays a role in the activation of DNA damage-dependent apoptosis at the DNA damage checkpoint in pachytene cells. In Caenorhabditis elegans, this protein is Zip homologous protein 3.